The following is a 329-amino-acid chain: Serine/threonine-protein phosphatase PP1-alpha (329 aa).

Residues Asp-64, His-66, Asp-92, and Asn-124 each contribute to the Mn(2+) site. The active-site Proton donor is His-125. Residues His-173 and His-248 each contribute to the Mn(2+) site. Residues 309–329 form a disordered region; the sequence is GMNSGRPAVGGGRPGTTAGKK.

Belongs to the PPP phosphatase family. PP-1 subfamily. Interacts with lab-1; the interaction is direct. Interacts with knl-1; the interaction is direct. It depends on Mn(2+) as a cofactor.

The catalysed reaction is O-phospho-L-seryl-[protein] + H2O = L-seryl-[protein] + phosphate. It carries out the reaction O-phospho-L-threonyl-[protein] + H2O = L-threonyl-[protein] + phosphate. Serine/threonine-protein phosphatase which antagonizes the function of air-2 in the regulation of chromosome cohesion. Dephosphorylates histone H3 at 'Ser-10'. Dephosphorylates translation initiation factor eIF2alpha. Involved in the activation of chloride channel clh-3 during cell swelling and meiotic maturation. This chain is Serine/threonine-protein phosphatase PP1-alpha (gsp-1), found in Caenorhabditis briggsae.